The following is a 462-amino-acid chain: Dipeptidyl peptidase 1 (462 aa).

The first 24 residues, methionine 1–serine 24, serve as a signal peptide directing secretion. 2 N-linked (GlcNAc...) asparagine glycosylation sites follow: asparagine 29 and asparagine 53. 5 cysteine pairs are disulfide-bonded: cysteine 30/cysteine 118, cysteine 54/cysteine 136, cysteine 254/cysteine 297, cysteine 290/cysteine 330, and cysteine 320/cysteine 336. Residues alanine 135–leucine 230 constitute a propeptide that is removed on maturation. Residue cysteine 257 is part of the active site. An N-linked (GlcNAc...) asparagine glycan is attached at asparagine 275. Chloride contacts are provided by phenylalanine 301 and tyrosine 303. Residue tyrosine 346 participates in chloride binding. Active-site residues include histidine 404 and asparagine 426.

This sequence belongs to the peptidase C1 family. As to quaternary structure, tetramer of heterotrimers consisting of exclusion domain, heavy- and light chains. The cofactor is chloride. In terms of tissue distribution, broadly distributed, but higher levels found in lung, liver, kidney and spleen. Lower levels found in testis and brain.

The protein localises to the lysosome. It carries out the reaction Release of an N-terminal dipeptide, Xaa-Yaa-|-Zaa-, except when Xaa is Arg or Lys, or Yaa or Zaa is Pro.. Its function is as follows. Thiol protease. Has dipeptidylpeptidase activity. Active against a broad range of dipeptide substrates composed of both polar and hydrophobic amino acids. Proline cannot occupy the P1 position and arginine cannot occupy the P2 position of the substrate. Can act as both an exopeptidase and endopeptidase. Activates serine proteases such as elastase, cathepsin G and granzymes A and B. The polypeptide is Dipeptidyl peptidase 1 (Ctsc) (Mus musculus (Mouse)).